We begin with the raw amino-acid sequence, 511 residues long: Maturase K (511 aa).

Belongs to the intron maturase 2 family. MatK subfamily.

It is found in the plastid. Its subcellular location is the chloroplast. Usually encoded in the trnK tRNA gene intron. Probably assists in splicing its own and other chloroplast group II introns. The protein is Maturase K of Phleum pratense (Common timothy).